Here is a 256-residue protein sequence, read N- to C-terminus: PGL/p-HBAD biosynthesis glycosyltransferase Mb2981 (256 aa).

It belongs to the glycosyltransferase 2 family.

Its function is as follows. Involved in glycosylation steps downstream of mono-O-methyl-glycosyl-p-hydroxybenzoic acid derivative (p-HBAD I) and 2-O-methyl-rhamnosyl-phenolphthiocerol dimycocerosate (mycoside B) during the p-hydroxybenzoic acid derivatives (p-HBAD) and glycosylated phenolphthiocerol dimycocerosates (PGL) biosynthesis. The chain is PGL/p-HBAD biosynthesis glycosyltransferase Mb2981 from Mycobacterium bovis (strain ATCC BAA-935 / AF2122/97).